The sequence spans 179 residues: Large ribosomal subunit protein uL5 (179 aa).

Belongs to the universal ribosomal protein uL5 family. In terms of assembly, part of the 50S ribosomal subunit; part of the 5S rRNA/L5/L18/L25 subcomplex. Contacts the 5S rRNA and the P site tRNA. Forms a bridge to the 30S subunit in the 70S ribosome.

This is one of the proteins that bind and probably mediate the attachment of the 5S RNA into the large ribosomal subunit, where it forms part of the central protuberance. In the 70S ribosome it contacts protein S13 of the 30S subunit (bridge B1b), connecting the 2 subunits; this bridge is implicated in subunit movement. Contacts the P site tRNA; the 5S rRNA and some of its associated proteins might help stabilize positioning of ribosome-bound tRNAs. In Desulfitobacterium hafniense (strain Y51), this protein is Large ribosomal subunit protein uL5.